Reading from the N-terminus, the 396-residue chain is Zinc metalloproteinase nas-24 (396 aa).

The signal sequence occupies residues 1–20 (MTRVVHIIGAAFLLSSYAYC). In terms of domain architecture, Peptidase M12A spans 44–230 (ERLGSKWLGG…YKINQYYGCG (187 aa)). Residues N63 and N79 are each glycosylated (N-linked (GlcNAc...) asparagine). 4 cysteine pairs are disulfide-bonded: C82–C229, C105–C129, C231–C251, and C253–C262. H137 is a Zn(2+) binding site. E138 is an active-site residue. Positions 141 and 147 each coordinate Zn(2+). In terms of domain architecture, EGF-like spans 224 to 263 (NQYYGCGCSTQLECKNGGYTSPSDCSRCNCPKGFFGKLCN). N310 carries N-linked (GlcNAc...) asparagine glycosylation.

Zn(2+) serves as cofactor.

The protein resides in the secreted. Functionally, metalloprotease. The sequence is that of Zinc metalloproteinase nas-24 (nas-24) from Caenorhabditis elegans.